The sequence spans 394 residues: Probable purine permease 23 (394 aa).

Positions 1–20 are enriched in basic and acidic residues; that stretch reads MEMTEASKHTTTHEESEHVQ. Positions 1 to 24 are disordered; that stretch reads MEMTEASKHTTTHEESEHVQNPEP. At serine 29 the chain carries Phosphoserine. A run of 10 helical transmembrane segments spans residues 43–63, 85–105, 124–144, 152–172, 180–200, 211–231, 254–274, 301–321, 328–348, and 352–372; these read ISVL…ILLL, WMQA…FFIF, LILL…LYAL, GFFM…TAII, WIII…PVFS, GIQA…LCLV, VLEM…VGLF, VGLA…VLYV, IVHM…FDFI, and FSWP…SYFY.

This sequence belongs to the purine permeases (TC 2.A.7.14) family.

The protein resides in the membrane. The protein is Probable purine permease 23 (PUP23) of Arabidopsis thaliana (Mouse-ear cress).